Consider the following 237-residue polypeptide: Aliphatic sulfonates import ATP-binding protein SsuB 1 (237 aa).

The ABC transporter domain maps to 5-221; it reads LMDIRVEHKA…PRDRRDPLLA (217 aa). Residue 38–45 coordinates ATP; that stretch reads GPSGCGKS.

The protein belongs to the ABC transporter superfamily. Aliphatic sulfonates importer (TC 3.A.1.17.2) family. As to quaternary structure, the complex is composed of two ATP-binding proteins (SsuB), two transmembrane proteins (SsuC) and a solute-binding protein (SsuA).

The protein resides in the cell inner membrane. It carries out the reaction ATP + H2O + aliphatic sulfonate-[sulfonate-binding protein]Side 1 = ADP + phosphate + aliphatic sulfonateSide 2 + [sulfonate-binding protein]Side 1.. In terms of biological role, part of the ABC transporter complex SsuABC involved in aliphatic sulfonates import. Responsible for energy coupling to the transport system. This Pseudomonas syringae pv. syringae (strain B728a) protein is Aliphatic sulfonates import ATP-binding protein SsuB 1.